The sequence spans 683 residues: MESEKIIEERLKALRSTIALHDFHYYVQDAPIIPDADYDKLFRTLQQLEQQYPHLITPDSPTQRVGAPPLKVFARLTHQTPMLSLTNAFTEDEAIAFDKRIREALNVDQVNYAVEPKFDGLAVSLVYTNGILTNGATRGDGYTGEDITLNLRTIPSIPLRLQTATVTDQFEVRGEVVMLKADFEHLNEQQRNKGEKLFANPRNAAAGSLRQLDSNITAARKLTFFAYDAVLSHKDQPFFSKHSEILDYLKSQQFLVAQQNGTTTGVAGLLTYYHEMGALRLSLPYEIDGVVYKVDNLTQQETLGYVSRAPRFAIAHKFPAQEASTELLTIEIQVGRTGALTPVARLAPVFVGGVTVTNATLHNEDEVQRKQIMIGDTVIVRRAGDVIPEVVAVIPEQRPAHAQPFIMPDHCPVCGSKAARLPGEAVTRCTGGLYCPAQRKQAIWHFASRRALDIDGLGEKLIDQLIDRELVHTPADLYKLNIDTLASLERMAEKSARNLVTAIEHSKKTTLPRFIYALGIRHVGEATAKALANQASHLDQLMTLDIEQLQQIPDVGPIVAQSIIDFFSEAHNREVIRQLLDSGLQWEIPNHGVQQSEQTNSAVSGKTFVLTGTLPTMTRDQAKIKIEQQGGKVTGSVSSATSYVVAGSDPGSKYAKAIGLGISVLDEDQLLSLLQNISTGAQQ.

NAD(+) is bound by residues 35–39 (DADYD), 84–85 (SL), and glutamate 115. Lysine 117 acts as the N6-AMP-lysine intermediate in catalysis. Residues arginine 138, glutamate 175, lysine 293, and lysine 317 each coordinate NAD(+). Zn(2+) contacts are provided by cysteine 411, cysteine 414, cysteine 429, and cysteine 435. Positions 598-683 (QTNSAVSGKT…LQNISTGAQQ (86 aa)) constitute a BRCT domain.

This sequence belongs to the NAD-dependent DNA ligase family. LigA subfamily. Requires Mg(2+) as cofactor. It depends on Mn(2+) as a cofactor.

It carries out the reaction NAD(+) + (deoxyribonucleotide)n-3'-hydroxyl + 5'-phospho-(deoxyribonucleotide)m = (deoxyribonucleotide)n+m + AMP + beta-nicotinamide D-nucleotide.. Functionally, DNA ligase that catalyzes the formation of phosphodiester linkages between 5'-phosphoryl and 3'-hydroxyl groups in double-stranded DNA using NAD as a coenzyme and as the energy source for the reaction. It is essential for DNA replication and repair of damaged DNA. This is DNA ligase from Nitrosomonas eutropha (strain DSM 101675 / C91 / Nm57).